A 142-amino-acid polypeptide reads, in one-letter code: Large ribosomal subunit protein uL13 (142 aa).

It belongs to the universal ribosomal protein uL13 family. In terms of assembly, part of the 50S ribosomal subunit.

Functionally, this protein is one of the early assembly proteins of the 50S ribosomal subunit, although it is not seen to bind rRNA by itself. It is important during the early stages of 50S assembly. In Polaromonas sp. (strain JS666 / ATCC BAA-500), this protein is Large ribosomal subunit protein uL13.